The chain runs to 116 residues: Guanylin (116 aa).

Residues 1–23 (MNACVLSVLCLLGALAVLVEGVT) form the signal peptide. Positions 24–101 (VQDGDLSFPL…LQRLEAIAQD (78 aa)) are excised as a propeptide. Intrachain disulfides connect Cys69–Cys83, Cys105–Cys113, and Cys108–Cys116.

The protein belongs to the guanylin family. As to expression, localized in both crypts and villi in the small intestine and to superficial epithelial cells in the colon.

The protein resides in the secreted. Functionally, endogenous activator of intestinal guanylate cyclase. It stimulates this enzyme through the same receptor binding region as the heat-stable enterotoxins. In Mus musculus (Mouse), this protein is Guanylin (Guca2a).